The primary structure comprises 723 residues: 1,3-beta-galactosyl-N-acetylhexosamine phosphorylase Cphy0577 (723 aa).

The active-site Proton donor is Asp-317.

Belongs to the glycoside hydrolase 112 family.

It catalyses the reaction beta-D-galactosyl-(1-&gt;3)-N-acetyl-D-glucosamine + phosphate = alpha-D-galactose 1-phosphate + N-acetyl-D-glucosamine. Reversibly phosphorolyzes beta-D-galactopyranosyl-(1-&gt;3)-N-acetyl-D-glucosamine to form alpha-D-galactopyranose 1-phosphate and acetyl-D-glucosamine. Active towards galacto-N-biose and lacto-N-biose. Does not phosphorolyze galacto-N-tetraose or lacto-N-tetraose. In the reverse reaction has activity toward N-acetyl-D-glucosamine and N-acetyl-D-galactosamine, but not L-rhamnose, D-glucose or D-galactose. This is 1,3-beta-galactosyl-N-acetylhexosamine phosphorylase Cphy0577 from Lachnoclostridium phytofermentans (strain ATCC 700394 / DSM 18823 / ISDg) (Clostridium phytofermentans).